Reading from the N-terminus, the 384-residue chain is Potassium channel subfamily K member 18 (384 aa).

Residues 1–23 (MEVSGHPQARRCCPEALGKLFPG) are Cytoplasmic-facing. Residues 24–44 (LCFLCFLVTYALVGAVVFSAI) form a helical membrane-spanning segment. The N-linked (GlcNAc...) asparagine glycan is linked to Asn70. Positions 103 to 129 (FLSSLFFCCTVFSTVGYGYIYPVTRLG) form an intramembrane region, pore-forming. Positions 116, 117, 118, and 119 each coordinate K(+). The tract at residues 116 to 121 (TVGYGY) is selectivity filter 1. The helical transmembrane segment at 130 to 148 (KYLCMLYALFGIPLMFLVL) threads the bilayer. At 149 to 280 (TDTGDILATI…EVGQQVERLD (132 aa)) the chain is on the cytoplasmic side. Residues 200–205 (PQIIIS) are interaction with calcineurin. The segment at 249–254 (RSNSCP) is interaction with YWHAH. 2 positions are modified to phosphoserine: Ser252 and Ser264. Residues 281–301 (IPLPIIALIVFAYISCAAAIL) form a helical membrane-spanning segment. The segment at residues 314 to 328 (FYFCFVTLTTIGFGD) is an intramembrane region (pore-forming). Positions 323 to 328 (TIGFGD) are selectivity filter 2. A helical membrane pass occupies residues 335-355 (NFFLFFSIYIIVGMEIVFIAF). The Cytoplasmic portion of the chain corresponds to 356 to 384 (KLVQNRLIDIYKNVMLFFAKGKFYHLVKK).

It belongs to the two pore domain potassium channel (TC 1.A.1.8) family. In terms of assembly, homodimer. Heterodimer with KCNK2. Heterodimer with KCNK10. Interacts with calcineurin. Interacts with YWHAH, in a phosphorylation-dependent manner. N-glycosylated. In terms of processing, phosphorylation of Ser-264 is required for the binding of 14-3-3eta/YWHAH. Calcineurin-mediated dephosphorylation enhances channel activity. In terms of tissue distribution, expressed in dorsal root ganglion and trigeminal ganglion neurons. Detected at low levels in spinal cord. Expressed in regulatory T cells (at protein level).

It localises to the cell membrane. The catalysed reaction is K(+)(in) = K(+)(out). Its activity is regulated as follows. Activated by volatile anesthetics but inhibited by amide local anesthetics. Inhibited by Ba(2+) ions. Inhibited by free polyunsaturated fatty acids. Channel conductance is sensitive to intracellular pH, it decreases at acidic pH and increases at basic pH. In contrast to its mouse ortholog, it is not regulated by extracellular protons. Insensitive to changes in temperature. Functionally, k(+) channel that conducts outward and inward rectifying currents at depolarized and hyperpolarized membrane potentials, respectively. The outward rectifying currents are voltage-dependent, coupled to K(+) electrochemical gradient across the membrane, whereas the inward currents can be induced in response to activation of Ca(2+)-mobilizing receptors. Homo- and heterodimerizes to form functional channels with distinct regulatory and gating properties. In trigeminal ganglia sensory neurons, the heterodimers of KCNK18/TRESK and KCNK2/TREK-1 or KCNK10/TREK-2 inhibit neuronal firing and neurogenic inflammation by stabilizing the resting membrane potential at K(+) equilibrium potential as well as by regulating the threshold of action potentials and the spike frequency. In thymocytes, conducts K(+) currents upon T cell receptor (TCR) signaling leading to sustained Ca(2+) influx and NF-kappa-B activation, FOXP3 transcription and positive selection of regulatory T cell (Treg) progenitor subsets. Appears to mediate the analgesics effects of hydroxy-alpha-sanshool, a metabolite naturally present in Schezuan pepper and other Xanthoxylum plants. The chain is Potassium channel subfamily K member 18 from Homo sapiens (Human).